The primary structure comprises 396 residues: S-adenosylmethionine synthase (396 aa).

H16 contacts ATP. D18 lines the Mg(2+) pocket. E44 is a binding site for K(+). E57 and Q100 together coordinate L-methionine. The tract at residues 100-110 (QSVDIAQGVDR) is flexible loop. ATP is bound by residues 165-167 (DAK), D240, 246-247 (RK), A263, and K267. Position 240 (D240) interacts with L-methionine. K271 lines the L-methionine pocket.

The protein belongs to the AdoMet synthase family. Homotetramer; dimer of dimers. The cofactor is Mg(2+). K(+) serves as cofactor.

Its subcellular location is the cytoplasm. It catalyses the reaction L-methionine + ATP + H2O = S-adenosyl-L-methionine + phosphate + diphosphate. It participates in amino-acid biosynthesis; S-adenosyl-L-methionine biosynthesis; S-adenosyl-L-methionine from L-methionine: step 1/1. In terms of biological role, catalyzes the formation of S-adenosylmethionine (AdoMet) from methionine and ATP. The overall synthetic reaction is composed of two sequential steps, AdoMet formation and the subsequent tripolyphosphate hydrolysis which occurs prior to release of AdoMet from the enzyme. This Pseudomonas savastanoi pv. phaseolicola (strain 1448A / Race 6) (Pseudomonas syringae pv. phaseolicola (strain 1448A / Race 6)) protein is S-adenosylmethionine synthase.